The sequence spans 167 residues: Leptin (167 aa).

An N-terminal signal peptide occupies residues Met-1–Ala-21. Cysteines 117 and 167 form a disulfide.

It belongs to the leptin family.

Its subcellular location is the secreted. Key player in the regulation of energy balance and body weight control. Once released into the circulation, has central and peripheral effects by binding LEPR, found in many tissues, which results in the activation of several major signaling pathways. In the hypothalamus, acts as an appetite-regulating factor that induces a decrease in food intake and an increase in energy consumption by inducing anorexinogenic factors and suppressing orexigenic neuropeptides, also regulates bone mass and secretion of hypothalamo-pituitary-adrenal hormones. In the periphery, increases basal metabolism, influences reproductive function, regulates pancreatic beta-cell function and insulin secretion, is pro-angiogenic for endothelial cell and affects innate and adaptive immunity. In the arcuate nucleus of the hypothalamus, activates by depolarization POMC neurons inducing FOS and SOCS3 expression to release anorexigenic peptides and inhibits by hyperpolarization NPY neurons inducing SOCS3 with a consequent reduction on release of orexigenic peptides. In addition to its known satiety inducing effect, has a modulatory role in nutrient absorption. In the intestine, reduces glucose absorption by enterocytes by activating PKC and leading to a sequential activation of p38, PI3K and ERK signaling pathways which exerts an inhibitory effect on glucose absorption. Acts as a growth factor on certain tissues, through the activation of different signaling pathways increases expression of genes involved in cell cycle regulation such as CCND1, via JAK2-STAT3 pathway, or VEGFA, via MAPK1/3 and PI3K-AKT1 pathways. May also play an apoptotic role via JAK2-STAT3 pathway and up-regulation of BIRC5 expression. Pro-angiogenic, has mitogenic activity on vascular endothelial cells and plays a role in matrix remodeling by regulating the expression of matrix metalloproteinases (MMPs) and tissue inhibitors of metalloproteinases (TIMPs). In innate immunity, modulates the activity and function of neutrophils by increasing chemotaxis and the secretion of oxygen radicals. Increases phagocytosis by macrophages and enhances secretion of pro-inflammatory mediators. Increases cytotoxic ability of NK cells. Plays a pro-inflammatory role, in synergy with IL1B, by inducing NOS2 which promotes the production of IL6, IL8 and Prostaglandin E2, through a signaling pathway that involves JAK2, PI3K, MAP2K1/MEK1 and MAPK14/p38. In adaptive immunity, promotes the switch of memory T-cells towards T helper-1 cell immune responses. Increases CD4(+)CD25(-) T-cell proliferation and reduces autophagy during TCR (T-cell receptor) stimulation, through MTOR signaling pathway activation and BCL2 up-regulation. This is Leptin (LEP) from Capra hircus (Goat).